A 228-amino-acid chain; its full sequence is Ras-related protein Rab-32D (228 aa).

16–23 contacts GTP; sequence GDVNVGKT. An Effector region motif is present at residues 38-46; it reads YKSTIGADF. GTP-binding positions include 64 to 68 and 128 to 131; these read DTAGQ and NKSD. The segment at 183-228 is disordered; that stretch reads SDNEQFNDSPDEETSSITLLGTSKKHDNTNPNKPSTSSPSSCFNCK. The segment covering 185 to 196 has biased composition (acidic residues); that stretch reads NEQFNDSPDEET. Positions 211 to 228 are enriched in low complexity; that stretch reads TNPNKPSTSSPSSCFNCK. C224 carries S-geranylgeranyl cysteine lipidation.

This sequence belongs to the small GTPase superfamily. Rab family.

This is Ras-related protein Rab-32D (rab32D) from Dictyostelium discoideum (Social amoeba).